A 492-amino-acid chain; its full sequence is Protein odr-4 homolog (492 aa).

Residues 251–270 (LQPTSTTGGTATASSNTTDS) are disordered. Over residues 254–268 (TSTTGGTATASSNTT) the composition is skewed to low complexity. Residues 469 to 489 (MVGIAVALLVLLSSVALHFVL) form a helical membrane-spanning segment.

It belongs to the ODR-4 family.

The protein resides in the membrane. Its function is as follows. May play a role in the trafficking of a subset of G-protein coupled receptors. In Drosophila melanogaster (Fruit fly), this protein is Protein odr-4 homolog.